The primary structure comprises 332 residues: 3-dehydroquinate synthase (332 aa).

NAD(+) is bound by residues 55-60 (DGEEYK), 89-93 (GVITD), 113-114 (TT), K126, K134, and 152-155 (TLST). Positions 167, 226, and 242 each coordinate Zn(2+).

This sequence belongs to the sugar phosphate cyclases superfamily. Dehydroquinate synthase family. The cofactor is NAD(+). Requires Co(2+) as cofactor. Zn(2+) serves as cofactor.

Its subcellular location is the cytoplasm. It catalyses the reaction 7-phospho-2-dehydro-3-deoxy-D-arabino-heptonate = 3-dehydroquinate + phosphate. It participates in metabolic intermediate biosynthesis; chorismate biosynthesis; chorismate from D-erythrose 4-phosphate and phosphoenolpyruvate: step 2/7. Functionally, catalyzes the conversion of 3-deoxy-D-arabino-heptulosonate 7-phosphate (DAHP) to dehydroquinate (DHQ). This is 3-dehydroquinate synthase from Pyrococcus abyssi (strain GE5 / Orsay).